A 136-amino-acid chain; its full sequence is Small ribosomal subunit protein eS12 (136 aa).

This sequence belongs to the eukaryotic ribosomal protein eS12 family.

The polypeptide is Small ribosomal subunit protein eS12 (rps12) (Dictyostelium discoideum (Social amoeba)).